Reading from the N-terminus, the 578-residue chain is Probable nucleoredoxin 1 (578 aa).

Thioredoxin domains are found at residues 18-172, 178-321, and 325-485; these read SLLS…RARR, SVLV…EKFQ, and ELEK…EIEA.

It belongs to the nucleoredoxin family.

It carries out the reaction [protein]-dithiol + NAD(+) = [protein]-disulfide + NADH + H(+). The enzyme catalyses [protein]-dithiol + NADP(+) = [protein]-disulfide + NADPH + H(+). Probable thiol-disulfide oxidoreductase required for pollen tube growth and pollen function in the pistil. Seems not to be required for in vitro pollen tube growth. May be involved in the generation of lipid signaling molecules in pistil. This is Probable nucleoredoxin 1 from Arabidopsis thaliana (Mouse-ear cress).